Consider the following 228-residue polypeptide: Indole-3-glycerol phosphate synthase (228 aa).

It belongs to the TrpC family.

It catalyses the reaction 1-(2-carboxyphenylamino)-1-deoxy-D-ribulose 5-phosphate + H(+) = (1S,2R)-1-C-(indol-3-yl)glycerol 3-phosphate + CO2 + H2O. It participates in amino-acid biosynthesis; L-tryptophan biosynthesis; L-tryptophan from chorismate: step 4/5. The protein is Indole-3-glycerol phosphate synthase of Pyrococcus furiosus (strain ATCC 43587 / DSM 3638 / JCM 8422 / Vc1).